A 95-amino-acid polypeptide reads, in one-letter code: DNA-directed RNA polymerase subunit Rpo11 (95 aa).

Belongs to the archaeal Rpo11/eukaryotic RPB11/RPC19 RNA polymerase subunit family. As to quaternary structure, part of the RNA polymerase complex.

The protein resides in the cytoplasm. It carries out the reaction RNA(n) + a ribonucleoside 5'-triphosphate = RNA(n+1) + diphosphate. DNA-dependent RNA polymerase (RNAP) catalyzes the transcription of DNA into RNA using the four ribonucleoside triphosphates as substrates. In Thermococcus onnurineus (strain NA1), this protein is DNA-directed RNA polymerase subunit Rpo11.